A 337-amino-acid chain; its full sequence is Lipoyl synthase (337 aa).

The [4Fe-4S] cluster site is built by Cys81, Cys86, Cys92, Cys107, Cys111, Cys114, and Ser323. The Radical SAM core domain maps to 93–312 (FSHGTATFMI…EDYGNALGFS (220 aa)).

This sequence belongs to the radical SAM superfamily. Lipoyl synthase family. It depends on [4Fe-4S] cluster as a cofactor.

Its subcellular location is the cytoplasm. It catalyses the reaction [[Fe-S] cluster scaffold protein carrying a second [4Fe-4S](2+) cluster] + N(6)-octanoyl-L-lysyl-[protein] + 2 oxidized [2Fe-2S]-[ferredoxin] + 2 S-adenosyl-L-methionine + 4 H(+) = [[Fe-S] cluster scaffold protein] + N(6)-[(R)-dihydrolipoyl]-L-lysyl-[protein] + 4 Fe(3+) + 2 hydrogen sulfide + 2 5'-deoxyadenosine + 2 L-methionine + 2 reduced [2Fe-2S]-[ferredoxin]. It functions in the pathway protein modification; protein lipoylation via endogenous pathway; protein N(6)-(lipoyl)lysine from octanoyl-[acyl-carrier-protein]: step 2/2. In terms of biological role, catalyzes the radical-mediated insertion of two sulfur atoms into the C-6 and C-8 positions of the octanoyl moiety bound to the lipoyl domains of lipoate-dependent enzymes, thereby converting the octanoylated domains into lipoylated derivatives. This is Lipoyl synthase from Xanthomonas euvesicatoria pv. vesicatoria (strain 85-10) (Xanthomonas campestris pv. vesicatoria).